The chain runs to 611 residues: V-type proton ATPase catalytic subunit A (611 aa).

244–251 (GAFGCGKT) serves as a coordination point for ATP.

The protein belongs to the ATPase alpha/beta chains family. V-ATPase is a heteromultimeric enzyme made up of two complexes: the ATP-hydrolytic V1 complex and the proton translocation V0 complex. The V1 complex consists of three catalytic AB heterodimers that form a heterohexamer, three peripheral stalks each consisting of EG heterodimers, one central rotor including subunits D and F, and the regulatory subunits C and H. The proton translocation complex V0 consists of the proton transport subunit a, a ring of proteolipid subunits c9c'', rotary subunit d and subunit e.

The protein resides in the cell membrane. Its subcellular location is the vacuole. The protein localises to the vesicle. It carries out the reaction ATP + H2O + 4 H(+)(in) = ADP + phosphate + 5 H(+)(out). With respect to regulation, ATP hydrolysis occurs at the interface between the nucleotide-binding domains of subunits A and B. ATP hydrolysis triggers a conformational change in the subunits D and F, which induces a shift of subunit d. The c-ring is subsequently rotated and results in a continuous proton translocation across the membrane. Functionally, catalytic subunit of the V1 complex of vacuolar(H+)-ATPase (V-ATPase), a multisubunit enzyme composed of a peripheral complex (V1) that hydrolyzes ATP and a membrane integral complex (V0) that translocates protons. V-ATPase is responsible for acidifying and maintaining the pH of intracellular compartments and in some cell types, is targeted to the plasma membrane, where it is responsible for acidifying the extracellular environment. During the trophozoite stage, involved in the acidification of the extracellular space next to the cell membrane. The protein is V-type proton ATPase catalytic subunit A of Plasmodium falciparum (isolate 3D7).